The sequence spans 406 residues: MAPPGPASALSTSAEPLSRSIFRKFLLMLCSLLTSLYVFYCLAERCQTLSGPVVGLSGGGEEAGAPGGGVLAGGPRELAVWPAAAQRKRLLQLPQWRRRRPPAPRDDGEEAAWEEESPGLSGGPGGSGAGSTVAEAPPGTLALLLDEGSKQLPQAIIIGVKKGGTRALLEFLRVHPDVRAVGAEPHFFDRSYDKGLAWYRDLMPRTLDGQITMEKTPSYFVTREAPARISAMSKDTKLIVVVRDPVTRAISDYTQTLSKRPDIPTFESLTFKNRTAGLIDTSWSAIQIGIYAKHLEHWLRHFPIRQMLFVSGERLISDPAGELGRVQDFLGLKRIITDKHFYFNKTKGFPCLKKAEGSSRPHCLGKTKGRTHPEIDREVVRRLREFYRPFNLKFYQMTGHDFGWDG.

The Cytoplasmic segment spans residues 1-24 (MAPPGPASALSTSAEPLSRSIFRK). The helical; Signal-anchor for type II membrane protein transmembrane segment at 25–43 (FLLMLCSLLTSLYVFYCLA) threads the bilayer. Residues 44 to 406 (ERCQTLSGPV…MTGHDFGWDG (363 aa)) are Lumenal-facing. Positions 92 to 102 (QLPQWRRRRPP) are enriched in basic residues. The segment at 92–134 (QLPQWRRRRPPAPRDDGEEAAWEEESPGLSGGPGGSGAGSTVA) is disordered. Acidic residues predominate over residues 107–117 (DGEEAAWEEES). Residues 120 to 129 (LSGGPGGSGA) show a composition bias toward gly residues. 162–166 (KGGTR) provides a ligand contact to 3'-phosphoadenylyl sulfate. Substrate-binding positions include arginine 166, 184-190 (EPHFFDR), and 215-218 (KTPS). Arginine 243 and serine 251 together coordinate 3'-phosphoadenylyl sulfate. Position 255–259 (255–259 (QTLSK)) interacts with substrate. Asparagine 273 carries an N-linked (GlcNAc...) asparagine glycan. Substrate is bound at residue 283–284 (WS). The N-linked (GlcNAc...) asparagine glycan is linked to asparagine 344. Cysteine 351 and cysteine 363 are oxidised to a cystine. A substrate-binding site is contributed by 367–370 (TKGR). Position 368–372 (368–372 (KGRTH)) interacts with 3'-phosphoadenylyl sulfate.

It belongs to the sulfotransferase 1 family. Ubiquitous. Most abundant in heart and placenta, followed by liver and kidney.

It is found in the golgi apparatus membrane. It catalyses the reaction alpha-D-glucosaminyl-[heparan sulfate](n) + 3'-phosphoadenylyl sulfate = 3-sulfo-alpha-D-glucosaminyl-[heparan sulfate](n) + adenosine 3',5'-bisphosphate + H(+). Sulfotransferase that utilizes 3'-phospho-5'-adenylyl sulfate (PAPS) to catalyze the transfer of a sulfo group to an N-unsubstituted glucosamine linked to a 2-O-sulfo iduronic acid unit on heparan sulfate. Catalyzes the O-sulfation of glucosamine in IdoUA2S-GlcNS and also in IdoUA2S-GlcNH2. The substrate-specific O-sulfation generates an enzyme-modified heparan sulfate which acts as a binding receptor to Herpes simplex virus-1 (HSV-1) and permits its entry. Unlike HS3ST1/3-OST-1, does not convert non-anticoagulant heparan sulfate to anticoagulant heparan sulfate. This chain is Heparan sulfate glucosamine 3-O-sulfotransferase 3A1 (HS3ST3A1), found in Homo sapiens (Human).